An 85-amino-acid chain; its full sequence is Serine protease inhibitor Cvsi-2 (85 aa).

An N-terminal signal peptide occupies residues Met1 to Ala18.

In terms of processing, contains 6 disulfide bonds. In terms of tissue distribution, detected in hemolymph (at protein level). Within the digestive gland expression is limited to the basophil cells of the digestive diverticula.

It localises to the secreted. Slow-binding inhibitor of serine proteases. The inhibitor rapidly binds to the protease forming a weak enzyme-inhibitor complex, and this is followed by a slow isomerization forming a tight-binding enzyme-inhibitor complex. Active against subtilisin A with a dissociation constant of 0.18 nM. Active against perkinsin. Not active against thermolysin, papain or pepsin. In Crassostrea virginica (Eastern oyster), this protein is Serine protease inhibitor Cvsi-2.